A 337-amino-acid chain; its full sequence is UDP-N-acetylenolpyruvoylglucosamine reductase (337 aa).

An FAD-binding PCMH-type domain is found at 16-187; the sequence is ALPGRAARYQ…TSVIFRLAKA (172 aa). R160 is an active-site residue. Residue S237 is the Proton donor of the active site. E333 is an active-site residue.

FAD serves as cofactor.

The protein localises to the cytoplasm. It carries out the reaction UDP-N-acetyl-alpha-D-muramate + NADP(+) = UDP-N-acetyl-3-O-(1-carboxyvinyl)-alpha-D-glucosamine + NADPH + H(+). The protein operates within cell wall biogenesis; peptidoglycan biosynthesis. Functionally, cell wall formation. The protein is UDP-N-acetylenolpyruvoylglucosamine reductase of Dechloromonas aromatica (strain RCB).